We begin with the raw amino-acid sequence, 634 residues long: Serine/threonine kinase NLK (634 aa).

Residues 240 to 531 form the Protein kinase domain; that stretch reads SQPDRPIGYG…VEEALQHRYL (292 aa). ATP contacts are provided by residues 246-254 and lysine 269; that span reads IGYGAFGVV. Aspartate 366 (proton acceptor) is an active-site residue.

This sequence belongs to the protein kinase superfamily. CMGC Ser/Thr protein kinase family. MAP kinase subfamily. As to quaternary structure, component of the beta-catenin-lit-1 complex (also called the lit-1/wrm-1 complex or the wrm-1/lit-1 kinase complex) at least composed of lit-1 and wrm-1. Interacts with wrm-1 (via N-terminus); the interaction is direct and activates lit-1 kinase activity which leads to the phosphorylation of pop-1. This promotes pop-1 interaction with par-5 and translocation of pop-1 from the nucleus to the cytoplasm. Interacts with pop-1 (when phosphorylated on 'Ser-118' and 'Ser-127'); the interaction is dependent on the beta-catenin-lit-1 complex. Requires Mg(2+) as cofactor. Expressed in the pharynx and seam and vulval cells.

The protein resides in the cytoplasm. It is found in the cell cortex. Its subcellular location is the nucleus. It catalyses the reaction L-seryl-[protein] + ATP = O-phospho-L-seryl-[protein] + ADP + H(+). It carries out the reaction L-threonyl-[protein] + ATP = O-phospho-L-threonyl-[protein] + ADP + H(+). In terms of biological role, has a role in the Wnt signaling pathway controlling the asymmetry of cell divisions during embryogenesis. Operates in the AB and EMS cell lineages influencing cell specification. Required for body wall muscle development, endoderm development, pop-1 asymmetry and T-cell division asymmetry. Component of the beta-catenin-lit-1 complex which promotes the phosphorylation, down-regulation and subcellular relocation of pop-1. Regulates plp-1 nuclear localization in embryos. Plays a role in male tail tip morphogenesis. This chain is Serine/threonine kinase NLK, found in Caenorhabditis elegans.